A 378-amino-acid chain; its full sequence is 3,6-diketocamphane 1,6-monooxygenase (378 aa).

FMN is bound by residues His-10, Ser-44, Met-76, and 201–209 (TGFSYNSPS).

This sequence belongs to the bacterial luciferase oxidoreductase family. As to quaternary structure, homodimer. Likely forms a loose transient complex with a P.putida flavin reductase that provides the required FMNH(2) to the enzyme.

The catalysed reaction is (1S,4S)-bornane-2,5-dione + FMNH2 + O2 = (1S,4S)-5-oxo-1,2-campholide + FMN + H2O + H(+). Functionally, involved in the degradation and assimilation of (-)-camphor, which allows P.putida strain NCIMB 10007 to grow on this enantiomer of camphor as the sole carbon source. Catalyzes the FMNH(2)-dependent lactonization of 3,6-diketocamphane via a Baeyer-Villiger oxidation to produce the unstable lactone 5-oxo-1,2-campholide with (S,S) configuration, that presumably undergoes spontaneous hydrolysis to form 2-oxo-Delta(3)-4,5,5-trimethylcyclopentenylacetate. Is also able to convert (-)-camphor to the corresponding lactone in vitro. Shows no conversion of (+)-camphor, (+)-fenchone, (-)-fenchone, and (+)-nopinone. Acts on other bicyclic ketones but very poorly on a few 2- and 4-substituted monocyclic ketones. The sequence is that of 3,6-diketocamphane 1,6-monooxygenase from Pseudomonas putida (Arthrobacter siderocapsulatus).